We begin with the raw amino-acid sequence, 613 residues long: DBH-like monooxygenase protein 1 (613 aa).

Positions 1–19 are cleaved as a signal peptide; that stretch reads MCGWPLLVLWALLPATAAG. The Lumenal portion of the chain corresponds to 20-587; sequence SPGRSYPHRV…PLVCEKAASP (568 aa). The region spanning 35 to 148 is the DOMON domain; the sequence is GKYWLHWGRQ…STVRVIWAYH (114 aa). Asparagine 114 carries N-linked (GlcNAc...) asparagine glycosylation. The active site involves tyrosine 203. 2 cysteine pairs are disulfide-bonded: cysteine 205/cysteine 257 and cysteine 242/cysteine 269. Positions 235 and 236 each coordinate Cu cation. A glycan (N-linked (GlcNAc...) asparagine) is linked at asparagine 247. Histidine 307, histidine 389, histidine 391, and methionine 464 together coordinate Cu cation. 3 disulfide bridges follow: cysteine 364/cysteine 480, cysteine 368/cysteine 550, and cysteine 443/cysteine 465. Histidine 389 is a catalytic residue. 2 N-linked (GlcNAc...) asparagine glycosylation sites follow: asparagine 476 and asparagine 517. The helical transmembrane segment at 588-608 threads the bilayer; sequence PLHGIFSLRLLTCALLLGSML.

Belongs to the copper type II ascorbate-dependent monooxygenase family. The cofactor is Cu(2+). Post-translationally, N-glycosylated. Broadly exprressed, with highest levels in salivary gland and ovary.

The protein resides in the endoplasmic reticulum membrane. The protein is DBH-like monooxygenase protein 1 (Moxd1) of Mus musculus (Mouse).